Here is a 415-residue protein sequence, read N- to C-terminus: Glutamyl-tRNA reductase (415 aa).

Residues 49–52 (TCNR), serine 104, 109–111 (EPQ), and glutamine 115 contribute to the substrate site. The active-site Nucleophile is the cysteine 50. Residue 184–189 (GAGEMI) coordinates NADP(+).

This sequence belongs to the glutamyl-tRNA reductase family. As to quaternary structure, homodimer.

The enzyme catalyses (S)-4-amino-5-oxopentanoate + tRNA(Glu) + NADP(+) = L-glutamyl-tRNA(Glu) + NADPH + H(+). It functions in the pathway porphyrin-containing compound metabolism; protoporphyrin-IX biosynthesis; 5-aminolevulinate from L-glutamyl-tRNA(Glu): step 1/2. In terms of biological role, catalyzes the NADPH-dependent reduction of glutamyl-tRNA(Glu) to glutamate 1-semialdehyde (GSA). This chain is Glutamyl-tRNA reductase, found in Neisseria meningitidis serogroup B (strain ATCC BAA-335 / MC58).